Here is a 128-residue protein sequence, read N- to C-terminus: Large ribosomal subunit protein eL22 (128 aa).

It belongs to the eukaryotic ribosomal protein eL22 family. As to quaternary structure, component of the large ribosomal subunit.

It localises to the cytoplasm. In terms of biological role, component of the large ribosomal subunit. The ribosome is a large ribonucleoprotein complex responsible for the synthesis of proteins in the cell. This is Large ribosomal subunit protein eL22 (RPL22) from Gallus gallus (Chicken).